We begin with the raw amino-acid sequence, 421 residues long: ATP phosphoribosyltransferase regulatory subunit (421 aa).

It belongs to the class-II aminoacyl-tRNA synthetase family. HisZ subfamily. As to quaternary structure, heteromultimer composed of HisG and HisZ subunits.

It localises to the cytoplasm. It functions in the pathway amino-acid biosynthesis; L-histidine biosynthesis; L-histidine from 5-phospho-alpha-D-ribose 1-diphosphate: step 1/9. Its function is as follows. Required for the first step of histidine biosynthesis. May allow the feedback regulation of ATP phosphoribosyltransferase activity by histidine. The polypeptide is ATP phosphoribosyltransferase regulatory subunit (Clostridium novyi (strain NT)).